Reading from the N-terminus, the 135-residue chain is Galectin-1 (135 aa).

A2 is modified (N-acetylalanine). Residues 4–135 (GLVASNLNLK…DFKIKCVAFE (132 aa)) form the Galectin domain. An N6-acetyllysine mark is found at K13, K19, and K29. Position 30 is a phosphoserine (S30). A beta-D-galactoside contacts are provided by residues 45–49 (HFNPR), H53, N62, and 69–72 (WGTE). K108 bears the N6-acetyllysine; alternate mark. The residue at position 108 (K108) is an N6-succinyllysine; alternate. An N6-acetyllysine modification is found at K128.

As to quaternary structure, binds LGALS3BP. Interacts with CD2, CD3, CD4, CD6, CD7, CD43, ALCAM and CD45. Interacts with laminin. Interacts with SUSD2. Exists in a reversible and active monomer-homodimer equilibrium, the mononomer/dimer state is regulated by lectin concentration. Interacts with cargo receptor TMED10; the interaction mediates the translocation from the cytoplasm into the ERGIC (endoplasmic reticulum-Golgi intermediate compartment) and thereby secretion.

The protein localises to the cytoplasm. It is found in the secreted. It localises to the extracellular space. The protein resides in the extracellular matrix. Functionally, lectin that binds beta-galactoside and a wide array of complex carbohydrates. Plays a role in regulating apoptosis, cell proliferation and cell differentiation. Inhibits CD45 protein phosphatase activity and therefore the dephosphorylation of Lyn kinase. Strong inducer of T-cell apoptosis. This chain is Galectin-1 (LGALS1), found in Cricetulus griseus (Chinese hamster).